Here is a 532-residue protein sequence, read N- to C-terminus: Exopolysaccharide phosphotransferase CpsY (532 aa).

The protein belongs to the stealth family.

The polypeptide is Exopolysaccharide phosphotransferase CpsY (cpsY) (Mycobacterium bovis (strain ATCC BAA-935 / AF2122/97)).